Here is a 734-residue protein sequence, read N- to C-terminus: Photosystem I P700 chlorophyll a apoprotein A2 (734 aa).

8 helical membrane-spanning segments follow: residues 46–69, 135–158, 175–199, 273–291, 330–353, 369–395, 417–439, and 517–535; these read IFASHFGQLAVIFLWTSGNLFHVA, LYTGALFLLAVSAVALVAGWLHLQ, LNHHLSGLFGVSSLAWTGHLVHVAI, IAHHHLAIAVLFIVAGHMY, LHFQLGLALASLGVITSLVAQHMY, AALYTHHQYIAGFIMTGAFAHGAIFFI, AIISHLSWASLFLGFHTLGLYVH, and FLVHHAIALGLHTTTLILV. 2 residues coordinate [4Fe-4S] cluster: C559 and C568. The next 2 membrane-spanning stretches (helical) occupy residues 575–596 and 643–665; these read AFYLAVFWMLNTIGWVTFYWHW and LSVWAWMFLFGHLVWATGFMFLI. Residues H654, M662, and Y670 each contribute to the chlorophyll a site. W671 is a phylloquinone binding site. Residues 707-727 form a helical membrane-spanning segment; the sequence is LVGLAHFSVGYIFTYAAFLIA.

This sequence belongs to the PsaA/PsaB family. As to quaternary structure, the PsaA/B heterodimer binds the P700 chlorophyll special pair and subsequent electron acceptors. PSI consists of a core antenna complex that captures photons, and an electron transfer chain that converts photonic excitation into a charge separation. The eukaryotic PSI reaction center is composed of at least 11 subunits. It depends on P700 is a chlorophyll a/chlorophyll a' dimer, A0 is one or more chlorophyll a, A1 is one or both phylloquinones and FX is a shared 4Fe-4S iron-sulfur center. as a cofactor.

It is found in the plastid. The protein localises to the chloroplast thylakoid membrane. It carries out the reaction reduced [plastocyanin] + hnu + oxidized [2Fe-2S]-[ferredoxin] = oxidized [plastocyanin] + reduced [2Fe-2S]-[ferredoxin]. Functionally, psaA and PsaB bind P700, the primary electron donor of photosystem I (PSI), as well as the electron acceptors A0, A1 and FX. PSI is a plastocyanin-ferredoxin oxidoreductase, converting photonic excitation into a charge separation, which transfers an electron from the donor P700 chlorophyll pair to the spectroscopically characterized acceptors A0, A1, FX, FA and FB in turn. Oxidized P700 is reduced on the lumenal side of the thylakoid membrane by plastocyanin. This chain is Photosystem I P700 chlorophyll a apoprotein A2, found in Zygnema circumcarinatum (Green alga).